A 327-amino-acid chain; its full sequence is Zinc transport protein ZntB (327 aa).

Topologically, residues 1-273 (MEAIKGSDVN…ARRTYTMSLM (273 aa)) are cytoplasmic. A helical transmembrane segment spans residues 274 to 294 (AMVFLPSTFLTGLFGVNLGGI). At 295 to 300 (PGGGWR) the chain is on the periplasmic side. Residues 301-321 (FGFSLFCILLVVLIGGVTLWL) form a helical membrane-spanning segment. Over 322–327 (HRSKWL) the chain is Cytoplasmic.

This sequence belongs to the CorA metal ion transporter (MIT) (TC 1.A.35) family.

It localises to the cell inner membrane. It catalyses the reaction Zn(2+)(out) + H(+)(out) = Zn(2+)(in) + H(+)(in). In terms of biological role, zinc transporter. Acts as a Zn(2+):proton symporter, which likely mediates zinc ion uptake. This is Zinc transport protein ZntB from Salmonella enteritidis PT4 (strain P125109).